Reading from the N-terminus, the 400-residue chain is Dihydrolipoyllysine-residue succinyltransferase component of 2-oxoglutarate dehydrogenase complex (400 aa).

One can recognise a Lipoyl-binding domain in the interval 2–77; it reads GVKIIVPSLG…AVGEEIGDIN (76 aa). Lysine 43 is subject to N6-lipoyllysine. The segment covering 85–97 has biased composition (polar residues); that stretch reads NSNEAAKPQTASQ. The segment at 85–113 is disordered; sequence NSNEAAKPQTASQPVPEKVPKKPAVANNT. A Peripheral subunit-binding (PSBD) domain is found at 113 to 150; it reads TLAPSVQKLVTENKLDPNNIKGTGKDGRITKGDVLETM. Active-site residues include histidine 371 and aspartate 375.

Belongs to the 2-oxoacid dehydrogenase family. Forms a 24-polypeptide structural core with octahedral symmetry. Part of the 2-oxoglutarate dehydrogenase (OGDH) complex composed of E1 (2-oxoglutarate dehydrogenase), E2 (dihydrolipoamide succinyltransferase) and E3 (dihydrolipoamide dehydrogenase); the complex contains multiple copies of the three enzymatic components (E1, E2 and E3). Requires (R)-lipoate as cofactor.

The enzyme catalyses N(6)-[(R)-dihydrolipoyl]-L-lysyl-[protein] + succinyl-CoA = N(6)-[(R)-S(8)-succinyldihydrolipoyl]-L-lysyl-[protein] + CoA. It participates in amino-acid degradation; L-lysine degradation via saccharopine pathway; glutaryl-CoA from L-lysine: step 6/6. Its function is as follows. E2 component of the 2-oxoglutarate dehydrogenase (OGDH) complex which catalyzes the second step in the conversion of 2-oxoglutarate to succinyl-CoA and CO(2). In Rickettsia bellii (strain RML369-C), this protein is Dihydrolipoyllysine-residue succinyltransferase component of 2-oxoglutarate dehydrogenase complex (sucB).